A 117-amino-acid polypeptide reads, in one-letter code: Acylphosphatase (117 aa).

Positions 21–107 constitute an Acylphosphatase-like domain; that stretch reads RWRFRIRGLV…TGADWFEIRP (87 aa). Residues Arg36 and Asn54 contribute to the active site.

Belongs to the acylphosphatase family.

The catalysed reaction is an acyl phosphate + H2O = a carboxylate + phosphate + H(+). This chain is Acylphosphatase (acyP), found in Synechococcus sp. (strain RCC307).